We begin with the raw amino-acid sequence, 183 residues long: MEESQQQSTKFDAPPSPYVPSRVYLAQIYWKKPAIVVLRVLQFVFSLIAFSVMADLLHDVQGSIKSLSYTVAIGVLACAYALAQLSFSLWCVIRGATSSSGVTPLYQYATFICDQMSTYFLISAASATATLIDVSGVCGSNGSGTNLCSRSTASVTFAFLAFLAFSASSVLTGYYLVKCILKA.

Topologically, residues 1-33 are cytoplasmic; that stretch reads MEESQQQSTKFDAPPSPYVPSRVYLAQIYWKKP. The helical transmembrane segment at 34–54 threads the bilayer; the sequence is AIVVLRVLQFVFSLIAFSVMA. The Extracellular segment spans residues 55-72; sequence DLLHDVQGSIKSLSYTVA. A helical membrane pass occupies residues 73-93; the sequence is IGVLACAYALAQLSFSLWCVI. The Cytoplasmic portion of the chain corresponds to 94–118; that stretch reads RGATSSSGVTPLYQYATFICDQMST. The chain crosses the membrane as a helical span at residues 119 to 139; the sequence is YFLISAASATATLIDVSGVCG. The Extracellular portion of the chain corresponds to 140 to 156; it reads SNGSGTNLCSRSTASVT. Asparagine 141 is a glycosylation site (N-linked (GlcNAc...) asparagine). The helical transmembrane segment at 157 to 177 threads the bilayer; that stretch reads FAFLAFLAFSASSVLTGYYLV. Over 178-183 the chain is Cytoplasmic; it reads KCILKA.

The protein belongs to the Casparian strip membrane proteins (CASP) family. Homodimer and heterodimers.

It localises to the cell membrane. The protein is CASP-like protein UU1 of Selaginella moellendorffii (Spikemoss).